The chain runs to 952 residues: Alpha-L-rhamnosidase (952 aa).

An N-terminal signal peptide occupies residues 1–21 (MKYNKLLFSLLLLAVFCFSCK). Alpha-L-rhamnose contacts are provided by residues Asp520, 524–525 (RE), Asp532, and Trp594. The active-site Proton donor is Glu525. Glu809 (proton acceptor) is an active-site residue. Alpha-L-rhamnose is bound at residue His826.

Belongs to the glycosyl hydrolase 78 family.

Its subcellular location is the cell membrane. It catalyses the reaction Hydrolysis of terminal non-reducing alpha-L-rhamnose residues in alpha-L-rhamnosides.. Alpha-L-rhamnosidase that may be involved in ulvan degradation. Ulvan is the main polysaccharide component of the Ulvales (green seaweed) cell wall. It is composed of disaccharide building blocks comprising 3-sulfated rhamnose (Rha3S) linked to D-glucuronic acid (GlcA), L-iduronic acid (IduA), or D-xylose (Xyl). The sequence is that of Alpha-L-rhamnosidase from Formosa agariphila (strain DSM 15362 / KCTC 12365 / LMG 23005 / KMM 3901 / M-2Alg 35-1).